Reading from the N-terminus, the 823-residue chain is Integrator complex assembly factor BRAT1 (823 aa).

The required for interaction with NDFIP1 stretch occupies residues 100–200; sequence PRLFGEAGPL…WPACAQKIVD (101 aa). HEAT repeat units follow at residues 495 to 531 and 544 to 576; these read LLFL…TGRW and SEVP…SSQG. Phosphoserine is present on S744. The BRAT1-like motif signature appears at 821–823; it reads DCY. Zn(2+) is bound at residue C822.

This sequence belongs to the BRAT1 family. As to quaternary structure, part of the multiprotein complex composed of BRAT1, WDR73, as well as integrator complex subunits INTS9 and INTS11. Interacts with BRCA1 and ATM. Interacts with MTOR and RPTOR. Interacts with NDFIP1. Interacts with SMC1A and PRKDC. In terms of processing, ubiquitinated by NEDD4, NEDD4L and ITCH; mono- and polyubiquitinated forms are detected.

The protein resides in the nucleus. It is found in the cytoplasm. Functionally, component of a multiprotein complex required for the assembly of the RNA endonuclease module of the integrator complex. Associates with INTS9 and INTS11 in the cytoplasm and blocks the active site of INTS11 to inhibit the endonuclease activity of INTS11 before formation of the full integrator complex. Following dissociation of WDR73 of the complex, BRAT1 facilitates the nuclear import of the INTS9-INTS11 heterodimer. In the nucleus, INTS4 is integrated to the INTS9-INTS11 heterodimer and BRAT1 is released from the mature RNA endonuclease module by inositol hexakisphosphate (InsP6). BRAT1 is also involved in DNA damage response; activates kinases ATM, SMC1A and PRKDC by modulating their phosphorylation status following ionizing radiation (IR) stress. Plays a role in regulating mitochondrial function and cell proliferation. Required for protein stability of MTOR and MTOR-related proteins, and cell cycle progress by growth factors. This is Integrator complex assembly factor BRAT1 (BRAT1) from Ailuropoda melanoleuca (Giant panda).